The chain runs to 376 residues: Immunoglobulin G-binding protein H (376 aa).

An N-terminal signal peptide occupies residues 1–41; sequence MTRQQTKKNYSLRKLKTGTASVAVALTVLGAGFANQTTVKA. Residues 69 to 271 are disordered; it reads TSLENEKLKS…AAKKELEANH (203 aa). Basic and acidic residues-rich tracts occupy residues 72 to 146, 156 to 203, 211 to 245, and 253 to 271; these read ENEK…KRYQ, ETEK…DKQI, LSRD…DKQI, and LSRD…EANH. C repeat units follow at residues 153-187, 195-229, and 237-271; these read QQLE…EAEH and QKLK…EANH. 4 D repeats span residues 272 to 277, 278 to 283, 286 to 291, and 293 to 298; these read QKLEAE, AKALKE, AKQAEE, and AKLRAG. The segment at 292–348 is disordered; it reads LAKLRAGKASDSQTPDTKPGNKAVPGKGQAPQAGTKPNQNKAPMKETKRQLPSTGET. Positions 342–346 match the LPXTG sorting signal motif; the sequence is LPSTG. Pentaglycyl murein peptidoglycan amidated threonine is present on threonine 345. A propeptide spans 346 to 376 (removed by sortase); the sequence is GETANPFFTAAALTVMATAGVAAVVKRKEEN.

The protein belongs to the M protein family.

The protein resides in the secreted. The protein localises to the cell wall. The protein is Immunoglobulin G-binding protein H of Streptococcus pyogenes serotype M1.